The chain runs to 114 residues: MGCRLLCCVVFCLLQAGPLDTAVSQTPKYLVTQMGNDKSIKCEQNLGHDTMYWYKQDSKKFLKIMFSYNNKELIINETVPNRFSPKSPDKAHLNLHINSLELGDSAVYFCASSQ.

The signal sequence occupies residues 1–21; sequence MGCRLLCCVVFCLLQAGPLDT. The 93-residue stretch at 22 to 114 folds into the Ig-like domain; the sequence is AVSQTPKYLV…SAVYFCASSQ (93 aa). An intrachain disulfide couples Cys-42 to Cys-110. N-linked (GlcNAc...) asparagine glycosylation occurs at Asn-76.

In terms of assembly, alpha-beta TR is a heterodimer composed of an alpha and beta chain; disulfide-linked. The alpha-beta TR is associated with the transmembrane signaling CD3 coreceptor proteins to form the TR-CD3 (TcR or TCR). The assembly of alpha-beta TR heterodimers with CD3 occurs in the endoplasmic reticulum where a single alpha-beta TR heterodimer associates with one CD3D-CD3E heterodimer, one CD3G-CD3E heterodimer and one CD247 homodimer forming a stable octameric structure. CD3D-CD3E and CD3G-CD3E heterodimers preferentially associate with TR alpha and TR beta chains, respectively. The association of the CD247 homodimer is the last step of TcR assembly in the endoplasmic reticulum and is required for transport to the cell surface.

The protein localises to the cell membrane. V region of the variable domain of T cell receptor (TR) beta chain that participates in the antigen recognition. Alpha-beta T cell receptors are antigen specific receptors which are essential to the immune response and are present on the cell surface of T lymphocytes. Recognize peptide-major histocompatibility (MH) (pMH) complexes that are displayed by antigen presenting cells (APC), a prerequisite for efficient T cell adaptive immunity against pathogens. Binding of alpha-beta TR to pMH complex initiates TR-CD3 clustering on the cell surface and intracellular activation of LCK that phosphorylates the ITAM motifs of CD3G, CD3D, CD3E and CD247 enabling the recruitment of ZAP70. In turn ZAP70 phosphorylates LAT, which recruits numerous signaling molecules to form the LAT signalosome. The LAT signalosome propagates signal branching to three major signaling pathways, the calcium, the mitogen-activated protein kinase (MAPK) kinase and the nuclear factor NF-kappa-B (NF-kB) pathways, leading to the mobilization of transcription factors that are critical for gene expression and essential for T cell growth and differentiation. The T cell repertoire is generated in the thymus, by V-(D)-J rearrangement. This repertoire is then shaped by intrathymic selection events to generate a peripheral T cell pool of self-MH restricted, non-autoaggressive T cells. Post-thymic interaction of alpha-beta TR with the pMH complexes shapes TR structural and functional avidity. The sequence is that of T cell receptor beta variable 3-1 from Homo sapiens (Human).